The primary structure comprises 235 residues: Serine protease SplA (235 aa).

An N-terminal signal peptide occupies residues 1-35 (MNENVMVKGLTALTILTSLGFAENISNQPHSIAKA). Residues histidine 74, aspartate 113, and serine 189 each act as charge relay system in the active site.

The protein belongs to the peptidase S1B family.

It is found in the secreted. In Staphylococcus aureus (strain MSSA476), this protein is Serine protease SplA (splA).